We begin with the raw amino-acid sequence, 114 residues long: Ribonuclease P protein component (114 aa).

This sequence belongs to the RnpA family. As to quaternary structure, consists of a catalytic RNA component (M1 or rnpB) and a protein subunit.

The catalysed reaction is Endonucleolytic cleavage of RNA, removing 5'-extranucleotides from tRNA precursor.. RNaseP catalyzes the removal of the 5'-leader sequence from pre-tRNA to produce the mature 5'-terminus. It can also cleave other RNA substrates such as 4.5S RNA. The protein component plays an auxiliary but essential role in vivo by binding to the 5'-leader sequence and broadening the substrate specificity of the ribozyme. This chain is Ribonuclease P protein component, found in Alkaliphilus oremlandii (strain OhILAs) (Clostridium oremlandii (strain OhILAs)).